The sequence spans 383 residues: Lipoyl synthase, mitochondrial (383 aa).

A compositionally biased stretch (polar residues) spans 25–34; it reads STPSLLQTLD. A disordered region spans residues 25–44; the sequence is STPSLLQTLDPSVPSPPAAG. [4Fe-4S] cluster contacts are provided by Cys-110, Cys-115, Cys-121, Cys-141, Cys-145, Cys-148, and Ser-357. One can recognise a Radical SAM core domain in the interval 126-346; it reads ETGTATATIM…RALGVEMGFR (221 aa).

This sequence belongs to the radical SAM superfamily. Lipoyl synthase family. [4Fe-4S] cluster is required as a cofactor.

The protein resides in the mitochondrion. The catalysed reaction is [[Fe-S] cluster scaffold protein carrying a second [4Fe-4S](2+) cluster] + N(6)-octanoyl-L-lysyl-[protein] + 2 oxidized [2Fe-2S]-[ferredoxin] + 2 S-adenosyl-L-methionine + 4 H(+) = [[Fe-S] cluster scaffold protein] + N(6)-[(R)-dihydrolipoyl]-L-lysyl-[protein] + 4 Fe(3+) + 2 hydrogen sulfide + 2 5'-deoxyadenosine + 2 L-methionine + 2 reduced [2Fe-2S]-[ferredoxin]. It participates in protein modification; protein lipoylation via endogenous pathway; protein N(6)-(lipoyl)lysine from octanoyl-[acyl-carrier-protein]: step 2/2. Its function is as follows. Catalyzes the radical-mediated insertion of two sulfur atoms into the C-6 and C-8 positions of the octanoyl moiety bound to the lipoyl domains of lipoate-dependent enzymes, thereby converting the octanoylated domains into lipoylated derivatives. This Zea mays (Maize) protein is Lipoyl synthase, mitochondrial.